The chain runs to 170 residues: Adenine phosphoribosyltransferase (170 aa).

This sequence belongs to the purine/pyrimidine phosphoribosyltransferase family. In terms of assembly, homodimer.

It localises to the cytoplasm. It carries out the reaction AMP + diphosphate = 5-phospho-alpha-D-ribose 1-diphosphate + adenine. Its pathway is purine metabolism; AMP biosynthesis via salvage pathway; AMP from adenine: step 1/1. Its function is as follows. Catalyzes a salvage reaction resulting in the formation of AMP, that is energically less costly than de novo synthesis. This is Adenine phosphoribosyltransferase from Nitrosopumilus maritimus (strain SCM1).